Consider the following 180-residue polypeptide: Signal peptidase complex subunit 2 (180 aa).

Topologically, residues 1–45 are cytoplasmic; it reads MSDERITVVNKWDGPTVKNGLDEVVKKILNDKVGWTEQHNLMNLR. A helical transmembrane segment spans residues 46–66; sequence LLISFIGVAFSAFACGYDFYA. Over 67-72 the chain is Lumenal; it reads PFPKSK. A helical transmembrane segment spans residues 73 to 93; that stretch reads IVLLVCSVSYFICMGVLQLFQ. At 94–180 the chain is on the cytoplasmic side; the sequence is WYVEKDCFYE…LWARLIRSEQ (87 aa).

The protein belongs to the SPCS2 family. In terms of assembly, component of the signal peptidase complex (SPC) composed of a catalytic subunit sec-11 and three accessory subunits spcs-1, spcs-2 and spcs-3. The complex induces a local thinning of the ER membrane which is used to measure the length of the signal peptide (SP) h-region of protein substrates. This ensures the selectivity of the complex towards h-regions shorter than 18-20 amino acids.

The protein localises to the endoplasmic reticulum membrane. Its function is as follows. Component of the signal peptidase complex (SPC) which catalyzes the cleavage of N-terminal signal sequences from nascent proteins as they are translocated into the lumen of the endoplasmic reticulum. Enhances the enzymatic activity of SPC and facilitates the interactions between different components of the translocation site. The polypeptide is Signal peptidase complex subunit 2 (Caenorhabditis briggsae).